A 422-amino-acid polypeptide reads, in one-letter code: Kynurenine--oxoglutarate transaminase 1 (422 aa).

Residues Gly36 and Asn185 each coordinate substrate. Lys247 is subject to N6-(pyridoxal phosphate)lysine. Arg398 lines the substrate pocket.

It belongs to the class-I pyridoxal-phosphate-dependent aminotransferase family. As to quaternary structure, homodimer. Requires pyridoxal 5'-phosphate as cofactor.

It is found in the cytoplasm. The protein resides in the cytosol. It carries out the reaction L-kynurenine + 2-oxoglutarate = kynurenate + L-glutamate + H2O. It catalyses the reaction 3-phenylpyruvate + L-glutamine = 2-oxoglutaramate + L-phenylalanine. The enzyme catalyses an S-substituted L-cysteine + H2O = a thiol + pyruvate + NH4(+). It participates in amino-acid degradation; L-kynurenine degradation; kynurenate from L-kynurenine: step 1/2. Inhibited by tryptophan, indole-3-pyruvic acid, 3-indolepropionic acid, DL-indole-3-lactic acid, indole-3-acetic acid (IAC), amino-oxyacetate (AOAA), aminooxy-phenylpropionic acid (AOPP) and Tris. Functionally, catalyzes the irreversible transamination of the L-tryptophan metabolite L-kynurenine to form kynurenic acid (KA), an intermediate in the tryptophan catabolic pathway which is also a broad spectrum antagonist of the three ionotropic excitatory amino acid receptors among others. Also metabolizes the cysteine conjugates of certain halogenated alkenes and alkanes to form reactive metabolites. Catalyzes the beta-elimination of S-conjugates and Se-conjugates of L-(seleno)cysteine, resulting in the cleavage of the C-S or C-Se bond. The protein is Kynurenine--oxoglutarate transaminase 1 of Homo sapiens (Human).